A 1927-amino-acid polypeptide reads, in one-letter code: Lactase/phlorizin hydrolase (1927 aa).

Residues 1–19 (MELSWHVVFIALLSFSCWG) form the signal peptide. The propeptide at 20 to 868 (SDWESDRNFI…NTVNLPSKVR (849 aa)) is XBetaGly. The Extracellular portion of the chain corresponds to 20–1882 (SDWESDRNFI…LMLGTTEAQT (1863 aa)). The N-linked (GlcNAc...) asparagine glycan is linked to asparagine 42. The interval 44–286 (SGLLGDQSSN…FIFNLKLPDC (243 aa)) is glycosyl hydrolase-1 1; Region I. The interval 362 to 855 (IWEAFANQSR…GFLTKGAKRL (494 aa)) is glycosyl hydrolase-1 2; Region II. Asparagine 368, asparagine 418, asparagine 512, asparagine 821, asparagine 934, asparagine 946, and asparagine 989 each carry an N-linked (GlcNAc...) asparagine glycan. Positions 902–1366 (TFRDDFLWGV…EVITNNGMPL (465 aa)) are glycosyl hydrolase-1 3; Region III. Phlorizin hydrolase/glycosylceramidase activity. Catalysis depends on glutamate 1065, which acts as the Proton donor; for phlorizin hydrolase/Glycosylceramidase activity. N-linked (GlcNAc...) asparagine glycosylation is present at asparagine 1174. A disordered region spans residues 1220 to 1244 (RLNPPSYEDDQEMAEEEDPSWPSTA). Residues 1226–1238 (YEDDQEMAEEEDP) are compositionally biased toward acidic residues. Glutamate 1273 (nucleophile; for phlorizin hydrolase/Glycosylceramidase activity) is an active-site residue. 2 N-linked (GlcNAc...) asparagine glycosylation sites follow: asparagine 1340 and asparagine 1508. The segment at 1373–1846 (LYGRFPEGFI…CNGFPDPATG (474 aa)) is glycosyl hydrolase-1 4; Region IV. Lactase activity. Glutamate 1538 serves as the catalytic Proton donor; for lactase activity. Positions 1647 to 1927 (RDRSLAAGLN…QQELSPVSSF (281 aa)) are required for homodimerization and transport to the plasma membrane. Residues asparagine 1656 and asparagine 1672 are each glycosylated (N-linked (GlcNAc...) asparagine). The Nucleophile; for lactase activity role is filled by glutamate 1749. 2 N-linked (GlcNAc...) asparagine glycosylation sites follow: asparagine 1761 and asparagine 1814. The helical transmembrane segment at 1883–1901 (ALYVLFSLVLLGVCGLAFL) threads the bilayer. At 1902 to 1927 (SYKYCKRSKQGKTQRSQQELSPVSSF) the chain is on the cytoplasmic side.

It belongs to the glycosyl hydrolase 1 family. As to quaternary structure, homodimer. In terms of processing, N-glycosylated. As to expression, specifically expressed in small intestine.

It localises to the apical cell membrane. The enzyme catalyses lactose + H2O = beta-D-galactose + D-glucose. It carries out the reaction phlorizin + H2O = phloretin + beta-D-glucose. The catalysed reaction is D-cellobiose + H2O = beta-D-glucose + D-glucose. It catalyses the reaction quercetin 4'-O-beta-D-glucoside + H2O = quercetin + beta-D-glucose. The enzyme catalyses quercetin 3-O-beta-D-glucoside + H2O = quercetin + beta-D-glucose. It carries out the reaction kaempferol 3-O-beta-D-glucoside + H2O = kaempferol + beta-D-glucose. The catalysed reaction is luteolin 7-O-beta-D-glucoside + H2O = luteolin + beta-D-glucose. It catalyses the reaction luteolin 4'-O-beta-D-glucoside + H2O = luteolin + beta-D-glucose. The enzyme catalyses (2S)-naringenin 7-O-beta-D-glucoside + H2O = (2S)-naringenin + beta-D-glucose. It carries out the reaction eriodictyol-7-O-beta-D-glucoside + H2O = (S)-eriodictyol + beta-D-glucose. The catalysed reaction is apigenin 7-O-beta-D-glucoside + H2O = apigenin + beta-D-glucose. It catalyses the reaction daidzein 7-O-beta-D-glucoside + H2O = daidzein + beta-D-glucose + H(+). The enzyme catalyses genistein 7-O-beta-D-glucoside + H2O = genistein + beta-D-glucose. It carries out the reaction a beta-D-galactosyl-N-acylsphingosine + H2O = a ceramide + beta-D-galactose.. The catalysed reaction is beta-D-glucosyl-(1&lt;-&gt;1')-N-hexadecanoylsphing-4-enine + H2O = N-hexadecanoylsphing-4-enine + beta-D-glucose. It catalyses the reaction beta-D-galactosyl-(1&lt;-&gt;1')-N-hexadecanoylsphing-4-enine + H2O = beta-D-galactose + N-hexadecanoylsphing-4-enine. The enzyme catalyses beta-D-galactosyl-(1&lt;-&gt;1')-N-hexadecanoylsphinganine + H2O = N-hexadecanoylsphinganine + beta-D-galactose. It carries out the reaction beta-D-glucosyl-(1&lt;-&gt;1')-N-hexadecanoylsphinganine + H2O = N-hexadecanoylsphinganine + beta-D-glucose. Functionally, broad specificity glycosidase of the intestinal brush border membrane that hydrolyzes lactose, the main sugar in mammalian milk, to produce D-glucose and D-galactose. The mature protein is composed of two domains that catalyze the hydrolysis of beta-glucopyranosides and beta-galactopyranosides, with a preference for hydrophilic aglycones (in lactose and cellobiose) for one domain and hydrophobic aglycones (in phlorizin and glycosylceramides) for the other. This Homo sapiens (Human) protein is Lactase/phlorizin hydrolase.